The chain runs to 629 residues: Polyadenylate-binding protein 2 (629 aa).

Over residues Met-1–Asn-12 the composition is skewed to polar residues. The interval Met-1–Ser-25 is disordered. The segment covering Gly-13–Ser-25 has biased composition (low complexity). RRM domains follow at residues Thr-36 to Arg-114, Gly-124 to Arg-201, Thr-215 to Lys-292, and Ser-318 to Arg-395. The segment at Pro-480–Gln-507 is disordered. The segment covering Gly-492–Gln-507 has biased composition (low complexity). The PABC domain occupies Thr-539 to Ala-616.

This sequence belongs to the polyadenylate-binding protein type-1 family. As to quaternary structure, interacts with eIF-iso4G. Interacts with ERD15/CID1 and CID7. Interacts with Turnip mosaic virus (TuMV) VPg-Pro and RNA-dependent RNA polymerase (RdRp). As to expression, expressed in all organs (at the protein level) but under distinct spatial and temporal regulation within each organ.

The protein resides in the cytoplasm. It localises to the nucleus. In terms of biological role, binds the poly(A) tail of mRNA. Appears to be an important mediator of the multiple roles of the poly(A) tail in mRNA biogenesis, stability and translation. In the cytoplasm, affects both translation and mRNA decay. Stimulates translation by interaction with translation initiation factor eIF4G, a subunit of the cap-binding complex eIF4F, bringing the 5'- and 3'-ends of the mRNA in proximity. The formation of this circular mRNP structure appears to be critical for the synergistic effects of the cap and the poly(A) tail in facilitating translation initiation, recycling of ribosomes, and mRNA stability. During infection with potyvirus TuMV, acts as a potential integral component of the viral replicase complex that could play an important role in the regulation of potyviral RNA-dependent RNA polymerase (RdRp). Binds to uridylated mRNAs and determines the size of uridine extensions. Limits uridine extension by URT1, likely by binding to the oligo(A) tail and preventing URT1 access. The chain is Polyadenylate-binding protein 2 (PAB2) from Arabidopsis thaliana (Mouse-ear cress).